The following is a 912-amino-acid chain: Brevican core protein (912 aa).

Positions 1–22 are cleaved as a signal peptide; the sequence is MAPLFLPLLATLVLAWIPVALA. Positions 36 to 155 constitute an Ig-like V-type domain; it reads RVRIAGDAPL…SSDAVEVKVK (120 aa). Cystine bridges form between cysteine 57–cysteine 137, cysteine 179–cysteine 250, cysteine 203–cysteine 224, cysteine 277–cysteine 352, and cysteine 301–cysteine 322. A glycan (N-linked (GlcNAc...) asparagine) is linked at asparagine 130. 2 Link domains span residues 157–252 and 257–354; these read VVFL…YCYA and GELF…YCFR. Asparagine 337 carries an N-linked (GlcNAc...) asparagine glycan. Disordered stretches follow at residues 408 to 427 and 438 to 651; these read IPII…PAEA and SIVP…SGDC. Serine 418 is subject to Phosphoserine. O-linked (Xyl...) (chondroitin sulfate) serine glycosylation is present at serine 418. Residues 448–463 show a composition bias toward basic and acidic residues; the sequence is EEGKVLEQEEKYRGEE. Acidic residues predominate over residues 464–478; sequence EKEEEEEEEEVEDEA. Residues 520-537 are compositionally biased toward pro residues; the sequence is VSPPPYDEPEAPRPPRVL. The span at 603–617 shows a compositional bias: basic and acidic residues; sequence GDTRDLETPSEENSR. The 37-residue stretch at 647–683 folds into the EGF-like domain; that stretch reads SSGDCVPSPCHNGGTCLEEEEGVRCLCLPGYGGDLCD. Intrachain disulfides connect cysteine 651–cysteine 662, cysteine 656–cysteine 671, cysteine 673–cysteine 682, cysteine 689–cysteine 700, cysteine 717–cysteine 809, cysteine 785–cysteine 801, cysteine 816–cysteine 859, and cysteine 845–cysteine 872. In terms of domain architecture, C-type lectin spans 683 to 811; the sequence is DVGLHFCSPG…NYHLSYTCKM (129 aa). The 61-residue stretch at 814–874 folds into the Sushi domain; sequence VSCGPPPELP…WGLPQISCVP (61 aa).

It belongs to the aggrecan/versican proteoglycan family. Interacts with TNR. In terms of processing, O-glycosylated; contains chondroitin sulfate. As to expression, brain; expressed in cerebellar astrocytes but not in neurons.

The protein localises to the secreted. The protein resides in the extracellular space. It localises to the extracellular matrix. Its function is as follows. May play a role in the terminally differentiating and the adult nervous system during postnatal development. Could stabilize interactions between hyaluronan (HA) and brain proteoglycans. This Bos taurus (Bovine) protein is Brevican core protein (BCAN).